A 1525-amino-acid chain; its full sequence is Receptor-type guanylate cyclase Gyc76C (1525 aa).

An N-terminal signal peptide occupies residues 1–19 (MTRWPFNLLLLLSVAVRDC). Topologically, residues 20 to 493 (SNHRTVLTVG…KKDDTHYTST (474 aa)) are extracellular. Residues N74, N184, N222, N338, N383, N394, N416, N428, and N458 are each glycosylated (N-linked (GlcNAc...) asparagine). A helical membrane pass occupies residues 494 to 514 (VAAVVLGVLLFCSGVITMSIY). The Cytoplasmic segment spans residues 515-1525 (RKWKIELEIE…AAARDRESIV (1011 aa)). Residues 547 to 824 (PSKVSLMSAQ…SVIRNRLKKM (278 aa)) enclose the Protein kinase domain. ATP-binding positions include 553–561 (MSAQSYGSR) and K581. The Guanylate cyclase domain maps to 896-1026 (TIYFSDIVGF…DTVNTASRME (131 aa)). D901, I902, and D945 together coordinate Mg(2+). 3 disordered regions span residues 1122–1168 (GSRR…NGLG), 1192–1217 (ETNE…LVRQ), and 1256–1308 (ESRS…VHSS). The span at 1147–1162 (ESPRMVSKRDRDRERP) shows a compositional bias: basic and acidic residues. Positions 1202-1212 (GGSGGVSGSGS) are enriched in gly residues. Over residues 1282–1308 (LSKNNSRSLDTGVSLISGNPNGEVHSS) the composition is skewed to polar residues.

Belongs to the adenylyl cyclase class-4/guanylyl cyclase family. Interacts with the semaphorin 1A receptor PlexA; PlexA enhances Gyc76C catalytic activity. Interacts with the PDZ domain-containing protein kermit; kermit increases cell surface expression of Gyc76C. As to expression, in the adult, widely distributed in the head and thorax with highest levels in the optic lobe and central brain and expression also detected in the retina. Expressed at similar levels in adult head and body. In females, highly expressed in oocytes with lower levels in the digestive tract. In mid-embryogenesis, enriched in the circular visceral mesoderm that overlies the migrating salivary gland and in the fat body that underlies the gland but at background levels in the gland itself. In late embryogenesis, detected in the mature salivary gland, in the somatic body wall muscles and the tendon cells to which the muscles attach, and in the constricting midgut. Also expressed in migrating tracheal cells at mid-embryogenesis and in the developed trachea at the end of embryogenesis with enrichment in the apical domains.

It is found in the cell membrane. The enzyme catalyses GTP = 3',5'-cyclic GMP + diphosphate. Guanylate cyclase involved in the production of the second messenger cGMP. Acts as a receptor for the NPLP1-4 peptide and modulates the innate immune IMD pathway in response to salt stress by inducing nuclear translocation of NF-kappa-B protein Rel which leads to increased expression of the antimicrobial peptide diptericin. Plays a role in Sema-1a-mediated axon repulsion which is required for the correct establishment of neuromuscular connectivity. Required in developing embryonic somatic muscle for correct patterning of ventral and lateral muscles and for localization of integrin beta-ps at developing dorsal muscle myotendinous junctions. Required for invagination, migration and lumen shape of the embryonic salivary gland by regulating the localization of the integrin-binding protein rhea/Talin to the visceral mesoderm surrounding the gland and maintaining the laminin matrix. Required in the developing wing to regulate extracellular matrix (ECM) organization by activating the cGMP-dependent protein kinase For which represses the activity of matrix metalloproteases such as Mmp2 and decreases ECM matrix reorganization. The protein is Receptor-type guanylate cyclase Gyc76C of Drosophila melanogaster (Fruit fly).